A 604-amino-acid polypeptide reads, in one-letter code: Netrin-1 (604 aa).

The N-terminal stretch at 1-24 is a signal peptide; that stretch reads MMRAVWEALAALAAVACLVGAVRG. Residues 47–284 enclose the Laminin N-terminal domain; it reads HPRRCIPDFV…AVSDLQVGGR (238 aa). Residues N95, N116, and N131 are each glycosylated (N-linked (GlcNAc...) asparagine). 15 cysteine pairs are disulfide-bonded: C119/C152, C285/C294, C287/C304, C306/C315, C318/C338, C341/C350, C343/C368, C371/C380, C383/C401, C404/C416, C406/C423, C425/C434, C437/C451, C472/C544, and C491/C601. 3 Laminin EGF-like domains span residues 285-340, 341-403, and 404-453; these read CKCN…ECVA, CNCN…ACKA, and CDCH…PCIK. N417 carries an N-linked (GlcNAc...) asparagine glycan. Positions 472-601 constitute an NTR domain; sequence CDSYCKASKG…FQQREKKGKC (130 aa). The short motif at 530–532 is the Cell attachment site element; the sequence is RGD.

In terms of assembly, binds to its receptors; DCC, UNC5A, UNC5B, UNC5C and probably UNC5D. Binds to its receptor; DSCAM. Interacts with DCC. Interacts with APP. Widely expressed in normal adult tissues with highest levels in heart, small intestine, colon, liver and prostate. Reduced expression in brain tumors and neuroblastomas. Expressed in epididymis (at protein level).

Its subcellular location is the secreted. It localises to the cytoplasm. Functionally, netrins control guidance of CNS commissural axons and peripheral motor axons. Its association with either DCC or some UNC5 receptors will lead to axon attraction or repulsion, respectively. Binding to UNC5C might cause dissociation of UNC5C from polymerized TUBB3 in microtubules and thereby lead to increased microtubule dynamics and axon repulsion. Involved in dorsal root ganglion axon projection towards the spinal cord. It also serves as a survival factor via its association with its receptors which prevent the initiation of apoptosis. Involved in tumorigenesis by regulating apoptosis. The polypeptide is Netrin-1 (NTN1) (Homo sapiens (Human)).